Consider the following 252-residue polypeptide: 2-succinyl-6-hydroxy-2,4-cyclohexadiene-1-carboxylate synthase (252 aa).

This sequence belongs to the AB hydrolase superfamily. MenH family. In terms of assembly, monomer.

It carries out the reaction 5-enolpyruvoyl-6-hydroxy-2-succinyl-cyclohex-3-ene-1-carboxylate = (1R,6R)-6-hydroxy-2-succinyl-cyclohexa-2,4-diene-1-carboxylate + pyruvate. It functions in the pathway quinol/quinone metabolism; 1,4-dihydroxy-2-naphthoate biosynthesis; 1,4-dihydroxy-2-naphthoate from chorismate: step 3/7. The protein operates within quinol/quinone metabolism; menaquinone biosynthesis. Its function is as follows. Catalyzes a proton abstraction reaction that results in 2,5-elimination of pyruvate from 2-succinyl-5-enolpyruvyl-6-hydroxy-3-cyclohexene-1-carboxylate (SEPHCHC) and the formation of 2-succinyl-6-hydroxy-2,4-cyclohexadiene-1-carboxylate (SHCHC). In Escherichia coli O9:H4 (strain HS), this protein is 2-succinyl-6-hydroxy-2,4-cyclohexadiene-1-carboxylate synthase.